We begin with the raw amino-acid sequence, 219 residues long: Protein VERNALIZATION 2 (219 aa).

Residues 138–180 form the CCT domain; sequence REAKVMRYREKKKRRRYEKQIRYESRKAYAEMRPRVKGRFAKV.

In terms of tissue distribution, mainly expressed in leaves, and at low levels in the shoot apical meristem (SAM).

The protein localises to the nucleus. Functionally, involved in the regulation of vernalization; this process in essential for flowering in cv. Bd29-1 but seems do not occur in cv. Bd21. In Brachypodium distachyon (Purple false brome), this protein is Protein VERNALIZATION 2.